The chain runs to 573 residues: SHC-transforming protein 2 (573 aa).

The PID domain maps to 125-307 (LGPGVSYIVR…TGLEESAWGD (183 aa)). In terms of domain architecture, SH2 spans 478 to 569 (WYHGRMSRRA…ESELHLRGVV (92 aa)).

As to quaternary structure, interacts with the Trk receptors in a phosphotyrosine-dependent manner and MEGF12. Once activated, binds to GRB2. In terms of processing, phosphorylated on tyrosine by the Trk receptors.

Signaling adapter that couples activated growth factor receptors to signaling pathway in neurons. Involved in the signal transduction pathways of neurotrophin-activated Trk receptors in cortical neurons. The sequence is that of SHC-transforming protein 2 (Shc2) from Rattus norvegicus (Rat).